We begin with the raw amino-acid sequence, 195 residues long: Dephospho-CoA kinase (195 aa).

The 194-residue stretch at 2–195 (IIGLTGGIGV…DIVDSLSLSS (194 aa)) folds into the DPCK domain. 10–15 (GVGKSF) is an ATP binding site.

It belongs to the CoaE family.

Its subcellular location is the cytoplasm. It carries out the reaction 3'-dephospho-CoA + ATP = ADP + CoA + H(+). It participates in cofactor biosynthesis; coenzyme A biosynthesis; CoA from (R)-pantothenate: step 5/5. In terms of biological role, catalyzes the phosphorylation of the 3'-hydroxyl group of dephosphocoenzyme A to form coenzyme A. This chain is Dephospho-CoA kinase, found in Wolbachia sp. subsp. Brugia malayi (strain TRS).